The following is a 165-amino-acid chain: Yapsin-5 (165 aa).

The first 24 residues, 1-24, serve as a signal peptide directing secretion; that stretch reads MQLFSILSLLSSLMCSLTVLGSSA. Asn-57 carries an N-linked (GlcNAc...) asparagine glycan. One can recognise a Peptidase A1 domain in the interval 67-165; it reads YVVKMEIGTP…TRLSSMTYTY (99 aa).

Belongs to the peptidase A1 family.

This is Yapsin-5 (YPS5) from Saccharomyces cerevisiae (strain ATCC 204508 / S288c) (Baker's yeast).